A 449-amino-acid polypeptide reads, in one-letter code: MKTLFVLFLLLLCVFAINANQEEENLPQSHHNLLHKVQQWRTSLKESSAAELKLSSAIIMAGVLCFLAALISSAGGIGGGGLFIPIMTIVAGVDLKTASSFSAFMVTGGSIANVISNLFGGKALLDYDLALLLEPCMLLGVSIGVICNRVLPEWLITVLFAVFLAWSSLKTCRSGVKFWKLESEIARESGHGRPERGQGQIEEETKNLKAPLLEAQATKNKSKIPWTKLGVLVIVWASFFVIYLLRGNKDGKGIITIKPCGVEYWILLSLQIPLALIFTKLALSRTESRQEQSPNDQKNQEGTRLDKSTRLKFPAMSFLAGLLGGIFGIGGGMLISPLLLQSGIPPQITAATTSFMVFFSATMSAVQYLLLGMQNTDTAYVFSFICFLASLLGLVLVQKAVAQFGRASIIVFSVGTVMSLSTVLMTSFGALDVWTDYVAGKDMGFKLPC.

12 consecutive transmembrane segments (helical) span residues 1 to 21 (MKTL…NANQ), 57 to 77 (AIIM…AGGI), 78 to 98 (GGGG…LKTA), 101 to 121 (FSAF…LFGG), 127 to 147 (YDLA…GVIC), 150 to 170 (VLPE…SSLK), 224 to 244 (IPWT…VIYL), 259 to 279 (PCGV…LIFT), 315 to 335 (AMSF…GMLI), 353 to 373 (TSFM…LLGM), 378 to 398 (TAYV…VLVQ), and 409 to 429 (IIVF…TSFG).

This sequence belongs to the 4-toluene sulfonate uptake permease (TSUP) (TC 2.A.102) family.

Its subcellular location is the membrane. The chain is Sulfite exporter TauE/SafE family protein 5 from Arabidopsis thaliana (Mouse-ear cress).